Here is a 326-residue protein sequence, read N- to C-terminus: Regulation of nuclear pre-mRNA domain-containing protein 1B (326 aa).

The residue at position 2 (Ser-2) is an N-acetylserine. The region spanning 2–133 (SSFSESALEK…QLKLSMEDSK (132 aa)) is the CID domain. Positions 128–144 (SMEDSKSPPPKAAEEKK) are enriched in basic and acidic residues. The tract at residues 128-148 (SMEDSKSPPPKAAEEKKSLKR) is disordered. Phosphoserine occurs at positions 132 and 134. At Tyr-161 the chain carries Phosphotyrosine. 2 positions are modified to phosphoserine: Ser-166 and Ser-299.

This sequence belongs to the UPF0400 (RTT103) family. Homodimer. May form a heterodimer with RPRD1A. Associates with RPAP2. Associates with the RNA polymerase II complex. Widely expressed in the adult with highest levels in liver, colon, prostate and uterus and lowest levels in heart and kidney. Not detected in rectum.

It is found in the nucleus. Interacts with phosphorylated C-terminal heptapeptide repeat domain (CTD) of the largest RNA polymerase II subunit POLR2A, and participates in dephosphorylation of the CTD by RPAP2. Transcriptional regulator which enhances expression of CCND1. Promotes binding of RNA polymerase II to the CCDN1 promoter and to the termination region before the poly-A site but decreases its binding after the poly-A site. Prevents RNA polymerase II from reading through the 3' end termination site and may allow it to be recruited back to the promoter through promotion of the formation of a chromatin loop. Also enhances the transcription of a number of other cell cycle-related genes including CDK2, CDK4, CDK6 and cyclin-E but not CDKN1A, CDKN1B or cyclin-A. Promotes cell proliferation. This is Regulation of nuclear pre-mRNA domain-containing protein 1B (Rprd1b) from Mus musculus (Mouse).